Reading from the N-terminus, the 2446-residue chain is Transcription factor HIVEP2 (2446 aa).

The segment at 1–93 (MDTGDTALGQ…YPPHRPSPYS (93 aa)) is disordered. Positions 17-28 (GETDKASGRWRQ) are enriched in basic and acidic residues. 2 C2H2-type zinc fingers span residues 189–211 (YICP…IRSH) and 217–239 (YPCI…RKSH). Disordered stretches follow at residues 272 to 303 (HSDG…PIPL), 340 to 416 (ESSQ…PPNT), 543 to 563 (SNSV…LRGS), and 751 to 985 (SHGH…SFER). 2 stretches are compositionally biased toward polar residues: residues 381–416 (SEPS…PPNT) and 543–556 (SNSV…NLTI). Over residues 751–760 (SHGHTERFDP) the composition is skewed to basic and acidic residues. Polar residues predominate over residues 766-777 (QPGSPSLVSEES). A compositionally biased stretch (basic and acidic residues) spans 782-791 (DSDKMSDLGG). Residues 800-812 (SVIQHTNSLSRPN) show a composition bias toward polar residues. Ser-819 is subject to Phosphoserine. The segment covering 863–878 (PSPSQQVQQQSYHTQP) has biased composition (low complexity). The segment covering 892–916 (RVTEEPDKPEKEKEAQSKEPEKPVE) has biased composition (basic and acidic residues). The Nuclear localization signal signature appears at 937–943 (PKKKRLR). Phosphoserine occurs at positions 950, 955, 1048, 1443, and 1447. Low complexity predominate over residues 952 to 982 (GESSFESTGTGLSRSPSQESNLSHSSSFSMS). The segment at 1485-1603 (KDLSRPQKPQ…LEEEGKGHKR (119 aa)) is disordered. Composition is skewed to low complexity over residues 1510–1533 (SGSS…SPSS) and 1576–1586 (SDMSMSPQSSS). C2H2-type zinc fingers lie at residues 1799 to 1821 (YICE…IRTH) and 1827 to 1851 (YVCK…SKAH). Disordered regions lie at residues 1882-1951 (AAEK…VNVG) and 2024-2129 (EECM…RRDL). Positions 1899 to 1925 (DAEESDGEDGDDNDDDDEDEDDFDDQG) are enriched in acidic residues. Positions 2029–2053 (PSEPSSSPRDFSPSSHHSSPGYDSS) are enriched in low complexity. 10 repeat units span residues 2053 to 2056 (SPCR), 2059 to 2062 (SPKR), 2071 to 2074 (SPRR), 2083 to 2086 (SPMR), 2089 to 2092 (SPRK), 2106 to 2109 (SPRR), 2112 to 2115 (SPRR), 2118 to 2121 (SPGK), 2130 to 2133 (SPRR), and 2145 to 2148 (SPRR). Residues 2053–2148 (SPCRDNSPKR…TTIRAPSPRR (96 aa)) are 10 X 4 AA tandem repeats of S-P-[RGMKC]-[RK]. The span at 2078-2107 (PRRDLSPMRHLSPRKEAALRREMSQRDVSP) shows a compositional bias: basic and acidic residues. Ser-2118 carries the phosphoserine modification. 3 disordered regions span residues 2242–2325 (PALS…QEEN), 2371–2403 (HFSR…SQTP), and 2423–2446 (HSSK…SQLH). Phosphoserine occurs at positions 2297 and 2301. Polar residues predominate over residues 2307-2317 (KQSTSEDSLNA). Residues 2387–2396 (PDLHDGEKDN) are compositionally biased toward basic and acidic residues. A phosphoserine mark is found at Ser-2429 and Ser-2431. Residues 2433 to 2446 (EESKDPSSEKSQLH) show a composition bias toward basic and acidic residues.

Interacts with TCF4. Expressed in brain and skeletal muscle.

The protein resides in the nucleus. In terms of biological role, this protein specifically binds to the DNA sequence 5'-GGGACTTTCC-3' which is found in the enhancer elements of numerous viral promoters such as those of SV40, CMV, or HIV1. In addition, related sequences are found in the enhancer elements of a number of cellular promoters, including those of the class I MHC, interleukin-2 receptor, somatostatin receptor II, and interferon-beta genes. It may act in T-cell activation. The protein is Transcription factor HIVEP2 (HIVEP2) of Homo sapiens (Human).